Consider the following 2155-residue polypeptide: Conidial pigment polyketide synthase PfmaE (2155 aa).

Residues 8-245 (LLFGDQSLDT…TAIPVYGPYH (238 aa)) are N-terminal acylcarrier protein transacylase domain (SAT). The 433-residue stretch at 381 to 813 (KCKLAIVGMA…GGNTGLLLED (433 aa)) folds into the Ketosynthase family 3 (KS3) domain. Catalysis depends on for beta-ketoacyl synthase activity residues Cys553, His688, and His731. A malonyl-CoA:ACP transacylase (MAT) domain region spans residues 910 to 1231 (AFMFTGQGSH…LCTLHSAGLN (322 aa)). Residue Ser1001 is the For acyl/malonyl transferase activity of the active site. Positions 1293–1608 (TTTVQKVVRE…PRKVLNVVLP (316 aa)) are product template (PT) domain. The interval 1297–1428 (QKVVREEVKG…CKVFFGDNEE (132 aa)) is N-terminal hotdog fold. Positions 1297–1604 (QKVVREEVKG…FQAIPRKVLN (308 aa)) constitute a PKS/mFAS DH domain. His1329 (proton acceptor; for dehydratase activity) is an active-site residue. Residues 1455 to 1604 (DASKIGRGLA…FQAIPRKVLN (150 aa)) form a C-terminal hotdog fold region. The active-site Proton donor; for dehydratase activity is the Asp1516. Carrier domains lie at 1653-1730 (LTKN…AQFE) and 1779-1856 (GNVS…GIED). Ser1690 carries the O-(pantetheine 4'-phosphoryl)serine modification. A disordered region spans residues 1738–1782 (EENAHSSASSDSADMETESNFTTPSDDSEKDEVKGDAPAADGNVS). Ser1816 bears the O-(pantetheine 4'-phosphoryl)serine mark. A disordered region spans residues 1855-1892 (EDKPKRAAPKSAKQEPAKPEPKVQGEAKAHTNPVDNYP). Basic and acidic residues predominate over residues 1866–1883 (AKQEPAKPEPKVQGEAKA). The segment at 1911–2041 (QLFMIPDGSG…LGEGDDAEAK (131 aa)) is thioesterase (TE) domain.

It participates in pigment biosynthesis; melanin biosynthesis. Functionally, non-reducing polyketide synthase; part of the gene cluster that mediates the biosynthesis of dihydroxynaphthalene (DHN)-melanin, a bluish-green pigment forming a dark layer in the conidial wall that protects the conidia from UV radiations. The first step of the pathway is the production of the pentaketide 1,3,6,8-tetrahydroxynaphthalene (1,3,6,8-THN or T4HN) by the polyketide synthase PfmaE though condensation of acetyl-CoA with malonyl-CoA. T4HN is not stable and easily oxidizes into the stable form flaviolin. T4HN is also substrate of the hydroxynaphthalene reductase PfmaG to yield scytalone. The scytalone dehydratase PfmaJ then reduces scytalone to 1,3,8-THN. 1,3,8-THN is then substrate of the hydroxynaphthalene reductase PfmaI to yield vermelone. Vermelone is further converted by the multicopper oxidase PfmaD to 1,8-DHN. Finally the laccase PFICI_06862 transforms 1,8-DHN to DHN-melanin. The roles of the 5-oxoprolinase PfmaA and the proline iminopeptidase PfmaB within the cluster have not been elucidated yet. The polypeptide is Conidial pigment polyketide synthase PfmaE (Pestalotiopsis fici (strain W106-1 / CGMCC3.15140)).